A 386-amino-acid chain; its full sequence is Probable Xaa-Pro aminopeptidase PMAA_074180 (386 aa).

Mn(2+) contacts are provided by Asp160, Asp171, Glu311, and Glu350.

It belongs to the peptidase M24B family. Mn(2+) serves as cofactor.

It carries out the reaction Release of any N-terminal amino acid, including proline, that is linked to proline, even from a dipeptide or tripeptide.. Its function is as follows. Catalyzes the removal of a penultimate prolyl residue from the N-termini of peptides. This Talaromyces marneffei (strain ATCC 18224 / CBS 334.59 / QM 7333) (Penicillium marneffei) protein is Probable Xaa-Pro aminopeptidase PMAA_074180.